The chain runs to 102 residues: MTIGLAHYLAVAAILFTIGVFGIFVNRKNIIVILMSIELILLAVNINLVAFSVYLGDVVGQIFAMFVLTVAAAEAAVGLAILVTFFRNRGDISVDDASMMKG.

Transmembrane regions (helical) follow at residues 5-25 (LAHY…GIFV), 30-50 (IIVI…NLVA), and 62-82 (IFAM…LAIL).

Belongs to the complex I subunit 4L family. In terms of assembly, NDH-1 is composed of 14 different subunits. Subunits NuoA, H, J, K, L, M, N constitute the membrane sector of the complex.

It localises to the cell inner membrane. The catalysed reaction is a quinone + NADH + 5 H(+)(in) = a quinol + NAD(+) + 4 H(+)(out). NDH-1 shuttles electrons from NADH, via FMN and iron-sulfur (Fe-S) centers, to quinones in the respiratory chain. The immediate electron acceptor for the enzyme in this species is believed to be ubiquinone. Couples the redox reaction to proton translocation (for every two electrons transferred, four hydrogen ions are translocated across the cytoplasmic membrane), and thus conserves the redox energy in a proton gradient. The sequence is that of NADH-quinone oxidoreductase subunit K from Phenylobacterium zucineum (strain HLK1).